A 162-amino-acid polypeptide reads, in one-letter code: Interleukin-15 (162 aa).

The signal sequence occupies residues 1–29 (MRISKPHLRITSIQCYVCLLLNTHFLTEA). A propeptide spanning residues 30–48 (GIRVFILGCISAGIPKTEA) is cleaved from the precursor. 2 disulfide bridges follow: Cys83/Cys133 and Cys90/Cys136. 3 N-linked (GlcNAc...) asparagine glycosylation sites follow: Asn119, Asn127, and Asn143.

This sequence belongs to the IL-15/IL-21 family.

It localises to the secreted. Cytokine that plays a major role in the development of inflammatory and protective immune responses to microbial invaders and parasites by modulating immune cells of both the innate and adaptive immune systems. Stimulates the proliferation of natural killer cells, T-cells and B-cells and promotes the secretion of several cytokines. In monocytes, induces the production of IL8 and monocyte chemotactic protein 1/CCL2, two chemokines that attract neutrophils and monocytes respectively to sites of infection. Unlike most cytokines, which are secreted in soluble form, IL15 is expressed in association with its high affinity IL15RA on the surface of IL15-producing cells and delivers signals to target cells that express IL2RB and IL2RG receptor subunits. Binding to its receptor triggers the phosphorylation of JAK1 and JAK3 and the recruitment and subsequent phosphorylation of signal transducer and activator of transcription-3/STAT3 and STAT5. In mast cells, induces the rapid tyrosine phosphorylation of STAT6 and thereby controls mast cell survival and release of cytokines such as IL4. In Marmota monax (Woodchuck), this protein is Interleukin-15 (IL15).